Here is a 257-residue protein sequence, read N- to C-terminus: Pyridoxine 5'-phosphate synthase (257 aa).

3-amino-2-oxopropyl phosphate is bound at residue Asn12. 14 to 15 (DH) contacts 1-deoxy-D-xylulose 5-phosphate. Arg23 is a binding site for 3-amino-2-oxopropyl phosphate. His48 (proton acceptor) is an active-site residue. Residues Arg50 and His55 each contribute to the 1-deoxy-D-xylulose 5-phosphate site. Catalysis depends on Glu75, which acts as the Proton acceptor. Residue Thr105 participates in 1-deoxy-D-xylulose 5-phosphate binding. The active-site Proton donor is the His199. Residues Gly200 and 221-222 (GH) each bind 3-amino-2-oxopropyl phosphate.

It belongs to the PNP synthase family. Homooctamer; tetramer of dimers.

The protein resides in the cytoplasm. The enzyme catalyses 3-amino-2-oxopropyl phosphate + 1-deoxy-D-xylulose 5-phosphate = pyridoxine 5'-phosphate + phosphate + 2 H2O + H(+). Its pathway is cofactor biosynthesis; pyridoxine 5'-phosphate biosynthesis; pyridoxine 5'-phosphate from D-erythrose 4-phosphate: step 5/5. In terms of biological role, catalyzes the complicated ring closure reaction between the two acyclic compounds 1-deoxy-D-xylulose-5-phosphate (DXP) and 3-amino-2-oxopropyl phosphate (1-amino-acetone-3-phosphate or AAP) to form pyridoxine 5'-phosphate (PNP) and inorganic phosphate. This Xanthobacter autotrophicus (strain ATCC BAA-1158 / Py2) protein is Pyridoxine 5'-phosphate synthase.